Consider the following 136-residue polypeptide: Small ribosomal subunit protein uS8 (136 aa).

Belongs to the universal ribosomal protein uS8 family. Part of the 30S ribosomal subunit. Contacts proteins S5 and S12.

One of the primary rRNA binding proteins, it binds directly to 16S rRNA central domain where it helps coordinate assembly of the platform of the 30S subunit. In Frankia alni (strain DSM 45986 / CECT 9034 / ACN14a), this protein is Small ribosomal subunit protein uS8.